The following is a 506-amino-acid chain: ATP synthase subunit alpha (506 aa).

172–179 is a binding site for ATP; sequence GDRKTGKT.

It belongs to the ATPase alpha/beta chains family. In terms of assembly, F-type ATPases have 2 components, CF(1) - the catalytic core - and CF(0) - the membrane proton channel. CF(1) has five subunits: alpha(3), beta(3), gamma(1), delta(1), epsilon(1). CF(0) has three main subunits: a(1), b(2) and c(9-12). The alpha and beta chains form an alternating ring which encloses part of the gamma chain. CF(1) is attached to CF(0) by a central stalk formed by the gamma and epsilon chains, while a peripheral stalk is formed by the delta and b chains.

The protein resides in the cell membrane. The enzyme catalyses ATP + H2O + 4 H(+)(in) = ADP + phosphate + 5 H(+)(out). Its function is as follows. Produces ATP from ADP in the presence of a proton gradient across the membrane. The alpha chain is a regulatory subunit. The chain is ATP synthase subunit alpha from Lactobacillus gasseri (strain ATCC 33323 / DSM 20243 / BCRC 14619 / CIP 102991 / JCM 1131 / KCTC 3163 / NCIMB 11718 / NCTC 13722 / AM63).